A 638-amino-acid polypeptide reads, in one-letter code: Protein disulfide-isomerase A4 (638 aa).

A signal peptide spans 1-20; the sequence is MKLRKAWLLVLLLALTQLLA. Thioredoxin domains are found at residues 21–162 and 162–294; these read AASA…EVSQ and QPDW…EFLK. The disordered stretch occupies residues 24 to 50; sequence AGDAHEDTSDTENATEEEEEEDDDDLE. A compositionally biased stretch (acidic residues) spans 32–50; that stretch reads SDTENATEEEEEEDDDDLE. An N-linked (GlcNAc...) asparagine glycan is attached at asparagine 36. A CXXC motif is present at residues 84 to 87; sequence CGHC. Intrachain disulfides connect cysteine 84–cysteine 87 and cysteine 199–cysteine 202. At lysine 359 the chain carries N6-acetyllysine. The region spanning 498–629 is the Thioredoxin 3 domain; sequence FKKGKLKPVI…LSKFIDEHAT (132 aa). The CXXC motif lies at 548 to 551; it reads CGHC. A disulfide bridge connects residues cysteine 548 and cysteine 551. The Prevents secretion from ER motif lies at 635 to 638; that stretch reads KEEL.

Belongs to the protein disulfide isomerase family. In terms of assembly, part of a large chaperone multiprotein complex comprising DNAJB11, HSP90B1, HSPA5, HYOU, PDIA2, PDIA4, PDIA6, PPIB, SDF2L1, UGGT1 and very small amounts of ERP29, but not, or at very low levels, CALR nor CANX. Component of a complex containing at least CRELD2, MANF, MATN3 and PDIA4.

Its subcellular location is the endoplasmic reticulum lumen. The protein localises to the melanosome. It carries out the reaction Catalyzes the rearrangement of -S-S- bonds in proteins.. The protein is Protein disulfide-isomerase A4 (Pdia4) of Mus musculus (Mouse).